The primary structure comprises 460 residues: Cysteine--tRNA ligase (460 aa).

Zn(2+) is bound at residue C29. The 'HIGH' region signature appears at 31-41 (MTIYDLCHIGH). Residues C213, H238, and E242 each contribute to the Zn(2+) site. The 'KMSKS' region motif lies at 270 to 274 (KMSKS). Position 273 (K273) interacts with ATP.

This sequence belongs to the class-I aminoacyl-tRNA synthetase family. Monomer. Requires Zn(2+) as cofactor.

The protein localises to the cytoplasm. The enzyme catalyses tRNA(Cys) + L-cysteine + ATP = L-cysteinyl-tRNA(Cys) + AMP + diphosphate. The sequence is that of Cysteine--tRNA ligase from Verminephrobacter eiseniae (strain EF01-2).